A 390-amino-acid polypeptide reads, in one-letter code: tRNA-specific 2-thiouridylase MnmA (390 aa).

Residues 20–27 (AMSGGVDS) and leucine 46 each bind ATP. Catalysis depends on cysteine 114, which acts as the Nucleophile. Residues cysteine 114 and cysteine 211 are joined by a disulfide bond. Glycine 138 contacts ATP. The interval 161-163 (RDQ) is interaction with tRNA. The active-site Cysteine persulfide intermediate is cysteine 211.

Belongs to the MnmA/TRMU family.

Its subcellular location is the cytoplasm. The catalysed reaction is S-sulfanyl-L-cysteinyl-[protein] + uridine(34) in tRNA + AH2 + ATP = 2-thiouridine(34) in tRNA + L-cysteinyl-[protein] + A + AMP + diphosphate + H(+). Functionally, catalyzes the 2-thiolation of uridine at the wobble position (U34) of tRNA, leading to the formation of s(2)U34. The sequence is that of tRNA-specific 2-thiouridylase MnmA from Azorhizobium caulinodans (strain ATCC 43989 / DSM 5975 / JCM 20966 / LMG 6465 / NBRC 14845 / NCIMB 13405 / ORS 571).